A 346-amino-acid polypeptide reads, in one-letter code: Peripherin-2 (346 aa).

Over 1-24 the chain is Cytoplasmic; it reads MALLKVKFDQKKRVKLAQGLWLMN. The helical transmembrane segment at 25-43 threads the bilayer; the sequence is WLSVLAGIVLFSLGLFLKI. Residues 44–61 lie on the Lumenal side of the membrane; the sequence is ELRKRSEVMNNSESHFVP. N-linked (GlcNAc...) asparagine glycosylation is present at Asn-53. The chain crosses the membrane as a helical span at residues 62-80; that stretch reads NSLIGVGVLSCVFNSLAGK. Residues 81–99 lie on the Cytoplasmic side of the membrane; sequence ICYDALDPAKYAKWKPWLK. The chain crosses the membrane as a helical span at residues 100-123; the sequence is PYLAVCIFFNVILFLVALCCFLLR. At 124-264 the chain is on the lumenal side; that stretch reads GSLESTLAYG…LNYYSSLMNS (141 aa). N-linked (GlcNAc...) asparagine glycosylation is present at Asn-229. A helical transmembrane segment spans residues 265–290; that stretch reads MGVVTLLVWLFEVSITAGLRYLHTAL. Residues 291 to 346 are Cytoplasmic-facing; sequence ESVSNPEDPECESEGWLLEKSVPETWKAFLESFKKLGKSNQVEAEGADAGPAPEAG. The interval 341 to 346 is interaction with MREG; that stretch reads PAPEAG.

The protein belongs to the PRPH2/ROM1 family. As to quaternary structure, homodimer; disulfide-linked. Forms a homotetramer. Forms a heterotetramer with ROM1. Homotetramer and heterotetramer core complexes go on to form higher order complexes by formation of intermolecular disulfide bonds. Interacts with MREG. Interacts with STX3 isoform 3B. Interacts with SNAP25. In terms of tissue distribution, expressed in the retina (at protein level).

The protein resides in the membrane. It localises to the cell projection. The protein localises to the cilium. It is found in the photoreceptor outer segment. Its subcellular location is the photoreceptor inner segment. Its function is as follows. Essential for retina photoreceptor outer segment disk morphogenesis, may also play a role with ROM1 in the maintenance of outer segment disk structure. Required for the maintenance of retinal outer nuclear layer thickness. Required for the correct development and organization of the photoreceptor inner segment. The protein is Peripherin-2 (Prph2) of Mus musculus (Mouse).